The primary structure comprises 1273 residues: Probable methionine synthase (1273 aa).

Residues 7-327 form the Hcy-binding domain; the sequence is FKELADIAKE…DHINAMYKAV (321 aa). Residues Cys-249, Cys-312, and Cys-313 each coordinate Zn(2+). One can recognise a Pterin-binding domain in the interval 360–621; it reads FVNIGERCNV…IDKPLLQLLE (262 aa). Residues 652–749 form the B12-binding N-terminal domain; that stretch reads KTDEWRNTSV…FMDAERQANI (98 aa). Methylcob(III)alamin is bound by residues Glu-699, 772–776, His-775, Ser-820, Thr-824, and Ala-876; that span reads GDVHD. The 136-residue stretch at 762 to 897 folds into the B12-binding domain; sequence QGTVVIATVK…DMTVRDAFLQ (136 aa). The region spanning 927–1273 is the AdoMet activation domain; it reads SLKDRRFVAL…LSPIIGYELD (347 aa). S-adenosyl-L-methionine is bound by residues Asp-977, Arg-1171, and 1225 to 1226; that span reads YF.

Belongs to the vitamin-B12 dependent methionine synthase family. Methylcob(III)alamin serves as cofactor. Zn(2+) is required as a cofactor.

The enzyme catalyses (6S)-5-methyl-5,6,7,8-tetrahydrofolate + L-homocysteine = (6S)-5,6,7,8-tetrahydrofolate + L-methionine. It functions in the pathway amino-acid biosynthesis; L-methionine biosynthesis via de novo pathway; L-methionine from L-homocysteine (MetH route): step 1/1. Its function is as follows. Catalyzes the transfer of a methyl group from methyl-cobalamin to homocysteine, yielding enzyme-bound cob(I)alamin and methionine. Subsequently, remethylates the cofactor using methyltetrahydrofolate. This is Probable methionine synthase (metr-1) from Caenorhabditis briggsae.